A 213-amino-acid polypeptide reads, in one-letter code: Phosphatidylcholine transfer protein (213 aa).

An N-acetylmethionine modification is found at Met1. Positions 1–212 (MDPGAGAFSE…MVKACQNYKK (212 aa)) constitute an START domain. Positions 72 and 78 each coordinate a 1,2-diacyl-sn-glycero-3-phosphocholine. The residue at position 139 (Ser139) is a Phosphoserine. Gln157 is an a 1,2-diacyl-sn-glycero-3-phosphocholine binding site. The tract at residues 171–176 (VFMYYF) is part of the binding site for phosphatidylcholine.

Interacts with ACOT13/THEM2.

It is found in the cytoplasm. Catalyzes the transfer of phosphatidylcholine between membranes. Binds phosphatidylcholine in a tight 1:1 stoichiometric complex. The chain is Phosphatidylcholine transfer protein (PCTP) from Bos taurus (Bovine).